A 357-amino-acid chain; its full sequence is Histidinol-phosphate aminotransferase (357 aa).

Lys-218 carries the post-translational modification N6-(pyridoxal phosphate)lysine.

Belongs to the class-II pyridoxal-phosphate-dependent aminotransferase family. Histidinol-phosphate aminotransferase subfamily. As to quaternary structure, homodimer. It depends on pyridoxal 5'-phosphate as a cofactor.

It carries out the reaction L-histidinol phosphate + 2-oxoglutarate = 3-(imidazol-4-yl)-2-oxopropyl phosphate + L-glutamate. It participates in amino-acid biosynthesis; L-histidine biosynthesis; L-histidine from 5-phospho-alpha-D-ribose 1-diphosphate: step 7/9. This chain is Histidinol-phosphate aminotransferase, found in Chlorobium luteolum (strain DSM 273 / BCRC 81028 / 2530) (Pelodictyon luteolum).